A 431-amino-acid chain; its full sequence is 3-isopropylmalate dehydratase large subunit (431 aa).

[4Fe-4S] cluster is bound by residues cysteine 308, cysteine 368, and cysteine 371.

Belongs to the aconitase/IPM isomerase family. LeuC type 2 subfamily. As to quaternary structure, heterodimer of LeuC and LeuD. The cofactor is [4Fe-4S] cluster.

It catalyses the reaction (2R,3S)-3-isopropylmalate = (2S)-2-isopropylmalate. The protein operates within amino-acid biosynthesis; L-leucine biosynthesis; L-leucine from 3-methyl-2-oxobutanoate: step 2/4. Functionally, catalyzes the isomerization between 2-isopropylmalate and 3-isopropylmalate, via the formation of 2-isopropylmaleate. This Desulfosudis oleivorans (strain DSM 6200 / JCM 39069 / Hxd3) (Desulfococcus oleovorans) protein is 3-isopropylmalate dehydratase large subunit.